Here is a 468-residue protein sequence, read N- to C-terminus: Siroheme synthase 3 (468 aa).

A precorrin-2 dehydrogenase /sirohydrochlorin ferrochelatase region spans residues 1 to 204 (MDYLPIFCRL…GDSASANQLA (204 aa)). NAD(+)-binding positions include 22 to 23 (EV) and 43 to 44 (PE). A Phosphoserine modification is found at serine 128. The segment at 216 to 468 (GEVVLVGAGP…GAADAALASA (253 aa)) is uroporphyrinogen-III C-methyltransferase. Proline 225 is an S-adenosyl-L-methionine binding site. Aspartate 248 acts as the Proton acceptor in catalysis. Catalysis depends on lysine 270, which acts as the Proton donor. S-adenosyl-L-methionine contacts are provided by residues 301–303 (GGD), isoleucine 306, 331–332 (TA), methionine 383, and glycine 412.

In the N-terminal section; belongs to the precorrin-2 dehydrogenase / sirohydrochlorin ferrochelatase family. The protein in the C-terminal section; belongs to the precorrin methyltransferase family.

The catalysed reaction is uroporphyrinogen III + 2 S-adenosyl-L-methionine = precorrin-2 + 2 S-adenosyl-L-homocysteine + H(+). It catalyses the reaction precorrin-2 + NAD(+) = sirohydrochlorin + NADH + 2 H(+). The enzyme catalyses siroheme + 2 H(+) = sirohydrochlorin + Fe(2+). It functions in the pathway cofactor biosynthesis; adenosylcobalamin biosynthesis; precorrin-2 from uroporphyrinogen III: step 1/1. It participates in cofactor biosynthesis; adenosylcobalamin biosynthesis; sirohydrochlorin from precorrin-2: step 1/1. Its pathway is porphyrin-containing compound metabolism; siroheme biosynthesis; precorrin-2 from uroporphyrinogen III: step 1/1. The protein operates within porphyrin-containing compound metabolism; siroheme biosynthesis; siroheme from sirohydrochlorin: step 1/1. It functions in the pathway porphyrin-containing compound metabolism; siroheme biosynthesis; sirohydrochlorin from precorrin-2: step 1/1. Functionally, multifunctional enzyme that catalyzes the SAM-dependent methylations of uroporphyrinogen III at position C-2 and C-7 to form precorrin-2 via precorrin-1. Then it catalyzes the NAD-dependent ring dehydrogenation of precorrin-2 to yield sirohydrochlorin. Finally, it catalyzes the ferrochelation of sirohydrochlorin to yield siroheme. This Aeromonas hydrophila subsp. hydrophila (strain ATCC 7966 / DSM 30187 / BCRC 13018 / CCUG 14551 / JCM 1027 / KCTC 2358 / NCIMB 9240 / NCTC 8049) protein is Siroheme synthase 3.